Consider the following 620-residue polypeptide: Chaperone protein HscA homolog (620 aa).

It belongs to the heat shock protein 70 family.

In terms of biological role, chaperone involved in the maturation of iron-sulfur cluster-containing proteins. Has a low intrinsic ATPase activity which is markedly stimulated by HscB. The polypeptide is Chaperone protein HscA homolog (Shewanella sp. (strain MR-4)).